A 537-amino-acid chain; its full sequence is Cytochrome bd ubiquinol oxidase subunit 1 (537 aa).

Residues 1-24 (MISESVVDLSRLQFAMTALYHFLF) lie on the Cytoplasmic side of the membrane. A heme b-binding site is contributed by histidine 21. A helical transmembrane segment spans residues 25-44 (VPLTLGMTFLLAIMESVYVM). Over 45-96 (TGKQVYKDMVKFWGKLFGINFALGVTTGITMEFQFGTNWAYYSHYVGDIFGA) the chain is Periplasmic. Residues 97-116 (PLAIEGLTAFFLESTFIGMF) traverse the membrane as a helical segment. Over 117–131 (FFGWDRLSKIQHLAV) the chain is Cytoplasmic. Residues 132-151 (TWLVALGSNLSALWILVANG) form a helical membrane-spanning segment. Residues 152-189 (WMQHPVGAEFNFETMRMELVDFGALLLNPVAQVKFVHT) are Periplasmic-facing. Histidine 188 serves as a coordination point for heme b. A helical transmembrane segment spans residues 190–209 (VASGYVTGAVFVLAISSYYL). Residues 210 to 221 (LKKRDLGFARRS) are Cytoplasmic-facing. Residues 222–241 (FAIASAFGMASILSVIVLGD) traverse the membrane as a helical segment. Residues 242–394 (ESGYEVGEVQ…VASMFWSFRA (153 aa)) lie on the Periplasmic side of the membrane. Residue methionine 395 participates in heme b binding. Residues 395-414 (MVGAGFAMLILFVCAFWASA) form a helical membrane-spanning segment. Over 415–472 (RKNEESKPWLLKFALYSLPLPWIATQTGWFVAEHGRQPWTIGGVLPTHLSASSLSTGD) the chain is Cytoplasmic. The chain crosses the membrane as a helical span at residues 473–492 (LWGSLIALIAFYTLLLVVEM). The Periplasmic portion of the chain corresponds to 493-537 (YLMIRFARLGPSSLHTGRYHFEQLEQHAVKHASPSQADPQQPVNA).

The protein belongs to the cytochrome ubiquinol oxidase subunit 1 family. As to quaternary structure, heterodimer of subunits I and II. Heme b serves as cofactor. It depends on heme d cis-diol as a cofactor.

It localises to the cell inner membrane. The enzyme catalyses 2 a ubiquinol + O2(in) + 4 H(+)(in) = 2 a ubiquinone + 2 H2O(in) + 4 H(+)(out). In terms of biological role, may be involved in maintaining the low intracellular oxygen concentration required for nitrogen fixation. The chain is Cytochrome bd ubiquinol oxidase subunit 1 (cydA) from Azotobacter vinelandii.